An 855-amino-acid chain; its full sequence is MDLKFSNFFKEAEHPALVKKFDKSTTDESSSKEDYSTMSDLWKMFSKAKSELSNGRRVENLTWRLMSINLQKNLTPNGDSNTLTPDTFSDPTAPSSAQSVPPTSSAETTADNSDTEMKLNPIPAYSVPADTTGSSLMEFNYIQRRVRKTSFDESTAKSKKRSIADSHFPDPNAMQRPHDLESQPFSYPKIHASNSFNFVKRDIDSSNFSNLDASALPISPPSDFFSVHSHNLPNAPPSIPANSNNSASPNQRIKASPKHADTDVLGLDFDMTPSEPSSFPENGGFPSFVDANTHEQTLFPSSATNSFSFEHGSAGFPIPGSVPSTSYHANTASEDGFSSSYNSQGLFGISSPLSSGVTPNQSFFPDVSGNNIFDVSRNNHEVSSPLIQSPGSYVSMPSINMVSSLPISAPVPNSNSQFPRRPNTFRTNSSKSVGQGSSGVDSNQENAESFNPSISSHNSAEWASGETTGHSSNSPLPGSDMFSPQFMRVGTAMGVAPVRSNSSNNFGQNFFHQTSPQFSAVPHRKVSAQDTNLMGSSPGMYNHMPYLNRATSANSITSPGVLPEGMAASLKKRTTNTAATPQAALPTTLDTKKDRSVSFNINKNAEKPTVSNAAEDKKGDANTRRANATNPTPTCTNCQTRTTPLWRRSPDGQPLCNACGLFMKINGVVRPLSLKTDVIKKRNRGVGTSATPKQSGGRKGSTRKSSSKSSSAKSTAADMKPKADSKSISPGFVGGNQSLSSERIPLDPSMRSPLQQQSSENESKSQSMLSANNLNAGVNDFGLGFSEGLGSAHLDSNDSSMVQGKNDFAPVVDSPLFDAFDTDLGMSSVAESHTMNMDPSDLSRVSKSWDWYSVM.

Residues 72-112 (KNLTPNGDSNTLTPDTFSDPTAPSSAQSVPPTSSAETTADN) are compositionally biased toward polar residues. Disordered regions lie at residues 72 to 126 (KNLT…PAYS), 149 to 184 (TSFDESTAKSKKRSIADSHFPDPNAMQRPHDLESQP), 229 to 287 (SHNL…GFPS), 412 to 483 (PNSN…DMFS), 602 to 643 (NKNA…TRTT), and 680 to 768 (KKRN…SQSM). Residues 149–168 (TSFDESTAKSKKRSIADSHF) are compositionally biased toward basic and acidic residues. Ser150 bears the Phosphoserine mark. Composition is skewed to low complexity over residues 240-250 (PANSNNSASPN) and 428-444 (NSSKSVGQGSSGVDSNQ). Residues 445–476 (ENAESFNPSISSHNSAEWASGETTGHSSNSPL) are compositionally biased toward polar residues. Residues 614–623 (AEDKKGDANT) show a composition bias toward basic and acidic residues. 2 stretches are compositionally biased toward low complexity: residues 625-643 (RANATNPTPTCTNCQTRTT) and 707-717 (SKSSSAKSTAA). The GATA-type zinc-finger motif lies at 635–659 (CTNCQTRTTPLWRRSPDGQPLCNAC). Residues Ser727 and Ser729 each carry the phosphoserine modification. The span at 755 to 767 (QQQSSENESKSQS) shows a compositional bias: low complexity.

Its subcellular location is the nucleus. Functionally, transcriptional activator. This Schizosaccharomyces pombe (strain 972 / ATCC 24843) (Fission yeast) protein is Transcription factor gaf1 (gaf1).